The primary structure comprises 684 residues: Probable metal-nicotianamine transporter YSL9 (684 aa).

A compositionally biased stretch (basic residues) spans 1–10 (MKQERRRKRQ). A disordered region spans residues 1 to 55 (MKQERRRKRQPGPPRLELVVAHPREEEMAGLDGGGDAEEGATHARGGGGAPPPWR). 14 consecutive transmembrane segments (helical) span residues 58–78 (LTAR…VIVM), 82–102 (LTTG…FVVL), 130–150 (CAVA…LLGL), 174–194 (GIAW…LALV), 234–254 (VNGF…QWFY), 295–315 (LVNL…WPLI), 341–361 (FICV…IVAL), 402–422 (LAFS…PMMF), 430–450 (VVIA…GAGL), 462–482 (IALF…AGLV), 515–535 (IIAQ…TFFL), 568–588 (FSAL…FAVA), 612–632 (VPFL…LIVF), and 642–662 (AALM…LWIF).

It belongs to the YSL (TC 2.A.67.2) family.

It is found in the membrane. Its function is as follows. May be involved in the transport of nicotianamine-chelated metals. The polypeptide is Probable metal-nicotianamine transporter YSL9 (YSL9) (Oryza sativa subsp. japonica (Rice)).